The primary structure comprises 109 residues: Thiosulfate sulfurtransferase GlpE (109 aa).

In terms of domain architecture, Rhodanese spans 16-104 (REQGAVVVDV…WRTTFPSETA (89 aa)). The Cysteine persulfide intermediate role is filled by C64.

It belongs to the GlpE family.

The protein localises to the cytoplasm. It carries out the reaction thiosulfate + hydrogen cyanide = thiocyanate + sulfite + 2 H(+). The enzyme catalyses thiosulfate + [thioredoxin]-dithiol = [thioredoxin]-disulfide + hydrogen sulfide + sulfite + 2 H(+). Functionally, transferase that catalyzes the transfer of sulfur from thiosulfate to thiophilic acceptors such as cyanide or dithiols. May function in a CysM-independent thiosulfate assimilation pathway by catalyzing the conversion of thiosulfate to sulfite, which can then be used for L-cysteine biosynthesis. The chain is Thiosulfate sulfurtransferase GlpE from Pseudomonas fluorescens (strain Pf0-1).